The sequence spans 196 residues: Alpha-crystallin A chain (196 aa).

Met-1 bears the N-acetylmethionine mark. Residues 1–63 (MDVTIQHPWF…RTVLDSGISE (63 aa)) form a required for complex formation with BFSP1 and BFSP2 region. Gln-6 carries the deamidated glutamine; partial modification. The residue at position 45 (Ser-45) is a Phosphoserine. At Gln-50 the chain carries Deamidated glutamine; partial. The 110-residue stretch at 76 to 185 (HAGNPKNNPG…GHSERAIPVS (110 aa)) folds into the sHSP domain. N6-acetyllysine is present on residues Lys-93 and Lys-122. Residue His-123 coordinates Zn(2+). Asn-124 bears the Deamidated asparagine; partial mark. Glu-125 and His-130 together coordinate Zn(2+). The residue at position 145 (Ser-145) is a Phosphoserine. Residue Asn-146 is modified to Deamidated asparagine; partial. Residues 168-196 (KVQSGLDAGHSERAIPVSREEKPSSAPSS) form a disordered region. Gln-170 carries the deamidated glutamine; partial modification. Basic and acidic residues predominate over residues 176–190 (GHSERAIPVSREEKP). Residue His-177 coordinates Zn(2+). A glycan (O-linked (GlcNAc) serine) is linked at Ser-185.

The protein belongs to the small heat shock protein (HSP20) family. As to quaternary structure, heteropolymer composed of three CRYAA and one CRYAB subunits. Inter-subunit bridging via zinc ions enhances stability, which is crucial as there is no protein turn over in the lens. Can also form homodimers and homotetramers (dimers of dimers) which serve as the building blocks of homooligomers. Within homooligomers, the zinc-binding motif is created from residues of 3 different molecules. His-123 and Glu-125 from one molecule are ligands of the zinc ion, and His-130 and His-177 residues from additional molecules complete the site with tetrahedral coordination geometry. Part of a complex required for lens intermediate filament formation composed of BFSP1, BFSP2 and CRYAA. Acetylation at Lys-93 may increase chaperone activity. Post-translationally, undergoes age-dependent proteolytical cleavage at the C-terminus. Cleavage by m-calpain produces specifically alpha-crystallin A(1-162), cleavage by Capn3/Lp82 produces specifically alpha-crystallin A(1-168) which is the major truncated form during normal maturation and induced cataract formation. Highly expressed in eye lens. Also expressed in non-lenticular tissues such as brain, spleen, liver, lung, skin, small intestine and a several epithelial and fibroblast cell lines with highest levels in spleen.

It localises to the cytoplasm. The protein localises to the nucleus. In terms of biological role, contributes to the transparency and refractive index of the lens. Acts as a chaperone, preventing aggregation of various proteins under a wide range of stress conditions. Required for the correct formation of lens intermediate filaments as part of a complex composed of BFSP1, BFSP2 and CRYAA. Inhibits bacterial growth in the lens. This chain is Alpha-crystallin A chain (Cryaa), found in Rattus norvegicus (Rat).